Here is a 260-residue protein sequence, read N- to C-terminus: MAEGKVDPVHQFTIETLFGTDHWSIGGYNIAFTNSALWMAITTAVLIVFVAGGAKRELVPGRWQMAVEGLTGFVDNLLQANIGKAGRKYLPYVFSLFAFILFANMLGLLPLALVGVHPFTATSHFTVTGVLAIMSFAIVLGVGFAKHGLHFFSLFVPHGTPVPMIPIIFPIELISFMVRPFSLGLRLFVAMMAGHVLLEVLSGFVISGTNAGVGTFFLAAVPSFLLMIGICALELLVAGIQAYVFALLTCVYLNDAENLH.

Transmembrane regions (helical) follow at residues 30–50, 96–116, 125–145, 151–171, 187–207, 213–233, and 234–254; these read IAFTNSALWMAITTAVLIVFV, LFAFILFANMLGLLPLALVGV, FTVTGVLAIMSFAIVLGVGFA, FFSLFVPHGTPVPMIPIIFPI, LFVAMMAGHVLLEVLSGFVIS, VGTFFLAAVPSFLLMIGICAL, and ELLVAGIQAYVFALLTCVYLN.

The protein belongs to the ATPase A chain family. As to quaternary structure, F-type ATPases have 2 components, CF(1) - the catalytic core - and CF(0) - the membrane proton channel. CF(1) has five subunits: alpha(3), beta(3), gamma(1), delta(1), epsilon(1). CF(0) has three main subunits: a(1), b(2) and c(9-12). The alpha and beta chains form an alternating ring which encloses part of the gamma chain. CF(1) is attached to CF(0) by a central stalk formed by the gamma and epsilon chains, while a peripheral stalk is formed by the delta and b chains.

The protein localises to the cell inner membrane. Its function is as follows. Key component of the proton channel; it plays a direct role in the translocation of protons across the membrane. The polypeptide is ATP synthase subunit a (Novosphingobium aromaticivorans (strain ATCC 700278 / DSM 12444 / CCUG 56034 / CIP 105152 / NBRC 16084 / F199)).